The primary structure comprises 556 residues: Neurofilament light polypeptide (556 aa).

The residue at position 2 (S2) is an N-acetylserine. The tract at residues 2–94 (SSYGYDPFFP…KSIRSQERAQ (93 aa)) is head. Positions 91–402 (ERAQLQDLND…KLLEGEETRL (312 aa)) constitute an IF rod domain. A coil 1A region spans residues 95 to 126 (LQDLNDRFACFIERVHELEQQNKVLEAELLVL). The segment at 127-139 (RQKHAEPSRFRAL) is linker 1. A coil 1B region spans residues 140–235 (YEQEIRELRL…KVHEEELAEL (96 aa)). A linker 12 region spans residues 236 to 254 (QAQIQYAHLSVEMDVSAKP). The interval 255–273 (DLSAALRDIRAQYEKLAAR) is coil 2A. Residues 274-282 (NMQNAEEWF) are linker 2. A coil 2B region spans residues 283–398 (RSRFTVLSES…AAYRKLLEGE (116 aa)). The tail, subdomain A stretch occupies residues 399 to 445 (ETRLSFTSVGSITSGYTQTAPTFGRSAYSGLQSTSYLMTTRSFPTYY). A tail region spans residues 399-556 (ETRLSFTSVG…KEETEVKKKA (158 aa)). Residues 446–556 (SSHVQEEQIE…KEETEVKKKA (111 aa)) are tail, subdomain B (acidic). The segment covering 464-473 (KAGEAKAAPA) has biased composition (low complexity). The segment at 464–556 (KAGEAKAAPA…KEETEVKKKA (93 aa)) is disordered. Acidic residues predominate over residues 474–540 (EEGEEEEKEE…AEETGEEEKE (67 aa)). Basic and acidic residues predominate over residues 541 to 556 (EKEAAGKEETEVKKKA).

It belongs to the intermediate filament family. In terms of assembly, forms homodimers (in vitro).

It localises to the cell projection. The protein resides in the axon. Its subcellular location is the cytoplasm. It is found in the cytoskeleton. Its function is as follows. Neurofilaments usually contain three intermediate filament proteins: NEFL, NEFM, and NEFH which are involved in the maintenance of neuronal caliber. May additionally cooperate with the neuronal intermediate filament proteins to form neuronal filamentous networks. The chain is Neurofilament light polypeptide (NEFL) from Coturnix japonica (Japanese quail).